The chain runs to 712 residues: Elongation factor G (712 aa).

One can recognise a tr-type G domain in the interval 8–290 (TRYRNIGISA…AVIEFLPSPT (283 aa)). Residues 17 to 24 (AHIDAGKT), 88 to 92 (DTPGH), and 142 to 145 (NKMD) contribute to the GTP site.

The protein belongs to the TRAFAC class translation factor GTPase superfamily. Classic translation factor GTPase family. EF-G/EF-2 subfamily.

The protein localises to the cytoplasm. Its function is as follows. Catalyzes the GTP-dependent ribosomal translocation step during translation elongation. During this step, the ribosome changes from the pre-translocational (PRE) to the post-translocational (POST) state as the newly formed A-site-bound peptidyl-tRNA and P-site-bound deacylated tRNA move to the P and E sites, respectively. Catalyzes the coordinated movement of the two tRNA molecules, the mRNA and conformational changes in the ribosome. The chain is Elongation factor G from Acinetobacter baumannii (strain AB307-0294).